The chain runs to 312 residues: Very-long-chain 3-oxoacyl-CoA reductase (312 aa).

The next 3 membrane-spanning stretches (helical) occupy residues 33–53, 181–201, and 274–294; these read VWGIGAGRAALGPGLGAWAVV, GVILNISSAAGMYPTPLLTLY, and HAFMGWVFSILPTSTVMNLLM. 48 to 77 contacts NADP(+); that stretch reads GAWAVVTGATDGIGKAYAKELAKRGMKVAL. S188 provides a ligand contact to substrate. Y201 acts as the Proton acceptor in catalysis.

Belongs to the short-chain dehydrogenases/reductases (SDR) family. 17-beta-HSD 3 subfamily. In terms of tissue distribution, brain.

The protein localises to the endoplasmic reticulum membrane. It catalyses the reaction a very-long-chain (3R)-3-hydroxyacyl-CoA + NADP(+) = a very-long-chain 3-oxoacyl-CoA + NADPH + H(+). The enzyme catalyses 17beta-estradiol + NAD(+) = estrone + NADH + H(+). It carries out the reaction 17beta-estradiol + NADP(+) = estrone + NADPH + H(+). The catalysed reaction is 3-oxooctadecanoyl-CoA + NADPH + H(+) = (3R)-hydroxyoctadecanoyl-CoA + NADP(+). It catalyses the reaction (7Z,10Z,13Z,16Z)-3-oxodocosatetraenoyl-CoA + NADPH + H(+) = (3R)-hydroxy-(7Z,10Z,13Z,16Z)-docosatetraenoyl-CoA + NADP(+). The enzyme catalyses 3-oxo-(7Z,10Z,13Z,16Z,19Z)-docosapentaenoyl-CoA + NADPH + H(+) = (3R)-hydroxy-(7Z,10Z,13Z,16Z,19Z)-docosapentaenoyl-CoA + NADP(+). It carries out the reaction (8Z,11Z,14Z)-3-oxoeicosatrienoyl-CoA + NADPH + H(+) = (3R)-hydroxy-(8Z,11Z,14Z)-eicosatrienoyl-CoA + NADP(+). The protein operates within lipid metabolism; fatty acid biosynthesis. It participates in steroid biosynthesis; estrogen biosynthesis. In terms of biological role, catalyzes the second of the four reactions of the long-chain fatty acids elongation cycle. This endoplasmic reticulum-bound enzymatic process, allows the addition of two carbons to the chain of long- and very long-chain fatty acids/VLCFAs per cycle. This enzyme has a 3-ketoacyl-CoA reductase activity, reducing 3-ketoacyl-CoA to 3-hydroxyacyl-CoA, within each cycle of fatty acid elongation. Thereby, it may participate in the production of VLCFAs of different chain lengths that are involved in multiple biological processes as precursors of membrane lipids and lipid mediators. May also catalyze the transformation of estrone (E1) into estradiol (E2) and play a role in estrogen formation. This Anas platyrhynchos (Mallard) protein is Very-long-chain 3-oxoacyl-CoA reductase (HSD17B12).